The chain runs to 208 residues: 3-demethoxyubiquinol 3-hydroxylase (208 aa).

The Fe cation site is built by E57, E87, H90, E139, E171, and H174.

The protein belongs to the COQ7 family. Requires Fe cation as cofactor.

It localises to the cell membrane. It carries out the reaction a 5-methoxy-2-methyl-3-(all-trans-polyprenyl)benzene-1,4-diol + AH2 + O2 = a 3-demethylubiquinol + A + H2O. It participates in cofactor biosynthesis; ubiquinone biosynthesis. Functionally, catalyzes the hydroxylation of 2-nonaprenyl-3-methyl-6-methoxy-1,4-benzoquinol during ubiquinone biosynthesis. The polypeptide is 3-demethoxyubiquinol 3-hydroxylase (Burkholderia pseudomallei (strain 668)).